The chain runs to 442 residues: Transducin beta-like protein 2 (442 aa).

The tract at residues 36–71 (EKPSQPVCQKENEPKKSGSKKQKQNQRVRKEKPQQH) is disordered. Basic residues predominate over residues 52–65 (SGSKKQKQNQRVRK). 7 WD repeats span residues 84-123 (SHSGNISCMDFSSNGKYLATCADDRTVRIWSTKDFLQREH), 130-170 (VELD…DGGF), 182-222 (KHKA…STIN), 224-263 (NQMNNSHAVISPCSRFVGSCGFTPDVKVWEVCFGKKGEFQ), 273-312 (GHSASVHSFAFSNDSRRMASVSKDGTWKLWDTDVEYKKQQ), 323-362 (EEASTMPCRLALSPDTHVLALATGTNIHLFNTRRGEKEEY), and 366-404 (VHGECIADLTFDITGRFLASCGDRAVRLFHNTPGHRAVV). Residue Lys-164 forms a Glycyl lysine isopeptide (Lys-Gly) (interchain with G-Cter in SUMO2) linkage. Residue Thr-428 is modified to Phosphothreonine.

The sequence is that of Transducin beta-like protein 2 (Tbl2) from Mus musculus (Mouse).